The primary structure comprises 521 residues: uncharacterized protein (521 aa).

The stretch at Q14 to Q41 forms a coiled coil. Composition is skewed to low complexity over residues L238–S266, S275–N353, and P423–P482. 2 disordered regions span residues L238–F357 and T413–G491.

This is an uncharacterized protein from Dictyostelium discoideum (Social amoeba).